A 307-amino-acid polypeptide reads, in one-letter code: Homoserine O-acetyltransferase (307 aa).

The active-site Acyl-thioester intermediate is the cysteine 142. Substrate-binding residues include lysine 163 and serine 192. Histidine 235 functions as the Proton acceptor in the catalytic mechanism. Glutamate 237 is a catalytic residue. Position 249 (arginine 249) interacts with substrate.

The protein belongs to the MetA family.

It localises to the cytoplasm. The catalysed reaction is L-homoserine + acetyl-CoA = O-acetyl-L-homoserine + CoA. It participates in amino-acid biosynthesis; L-methionine biosynthesis via de novo pathway; O-acetyl-L-homoserine from L-homoserine: step 1/1. Transfers an acetyl group from acetyl-CoA to L-homoserine, forming acetyl-L-homoserine. The sequence is that of Homoserine O-acetyltransferase from Rhizobium leguminosarum bv. trifolii (strain WSM2304).